The primary structure comprises 210 residues: Large ribosomal subunit protein uL15 (210 aa).

Disordered regions lie at residues 1–64 (MADD…AAPR) and 76–104 (AAGAKKEKTRVGRGEGSKGKTAGRGTKGT). A compositionally biased stretch (low complexity) spans 9 to 54 (EAAAKPVAEKATATALAKKAPAKAAAADKAAPAAKGETVAAKPAKA). Residues 79-93 (AKKEKTRVGRGEGSK) show a composition bias toward basic and acidic residues.

Belongs to the universal ribosomal protein uL15 family. In terms of assembly, part of the 50S ribosomal subunit.

Functionally, binds to the 23S rRNA. The polypeptide is Large ribosomal subunit protein uL15 (Leifsonia xyli subsp. xyli (strain CTCB07)).